The following is a 531-amino-acid chain: Anthranilate synthase component 1 (531 aa).

L-tryptophan-binding positions include S56 and 284 to 286 (PYM). 324–325 (GS) is a binding site for chorismate. E351 lines the Mg(2+) pocket. Residues Y439, R459, 473–475 (GGG), and G475 contribute to the chorismate site. E488 contacts Mg(2+). The tract at residues 506-531 (LHNITPDSVSAPDSVSSPDSVTEANS) is disordered. Residues 511–531 (PDSVSAPDSVSSPDSVTEANS) are compositionally biased toward low complexity.

It belongs to the anthranilate synthase component I family. In terms of assembly, heterotetramer consisting of two non-identical subunits: a beta subunit (TrpG) and a large alpha subunit (TrpE). It depends on Mg(2+) as a cofactor.

It catalyses the reaction chorismate + L-glutamine = anthranilate + pyruvate + L-glutamate + H(+). Its pathway is amino-acid biosynthesis; L-tryptophan biosynthesis; L-tryptophan from chorismate: step 1/5. With respect to regulation, feedback inhibited by tryptophan. In terms of biological role, part of a heterotetrameric complex that catalyzes the two-step biosynthesis of anthranilate, an intermediate in the biosynthesis of L-tryptophan. In the first step, the glutamine-binding beta subunit (TrpG) of anthranilate synthase (AS) provides the glutamine amidotransferase activity which generates ammonia as a substrate that, along with chorismate, is used in the second step, catalyzed by the large alpha subunit of AS (TrpE) to produce anthranilate. In the absence of TrpG, TrpE can synthesize anthranilate directly from chorismate and high concentrations of ammonia. The chain is Anthranilate synthase component 1 (trpE) from Arthrobacter globiformis.